The primary structure comprises 533 residues: Monogalactosyldiacylglycerol synthase 1, chloroplastic (533 aa).

His155 and Pro189 together coordinate a 1,2-diacyl-sn-glycero-3-phospho-(1'-sn-glycerol). A UDP-binding site is contributed by His155. Positions Gln192–Ser215 are required for binding to diacyl glycerol. Residues Arg324, Phe413, Ile414, Gly434–Glu438, and Glu456 each bind UDP.

It belongs to the glycosyltransferase 28 family. Homodimer. As to expression, expressed in roots, stems, leaves, flowers, siliques and seeds.

Its subcellular location is the plastid. It is found in the chloroplast inner membrane. The catalysed reaction is a 1,2-diacyl-sn-glycerol + UDP-alpha-D-galactose = a 1,2-diacyl-3-O-(beta-D-galactosyl)-sn-glycerol + UDP + H(+). It carries out the reaction 1,2-di-(9Z,12Z-octadecadienoyl)-sn-glycerol + UDP-alpha-D-galactose = 1,2-di-(9Z,12Z-octadecadienoyl)-3-beta-D-galactosyl-sn-glycerol + UDP + H(+). The enzyme catalyses 1-(9Z-octadecenoyl)-2-hexadecanoyl-sn-glycerol + UDP-alpha-D-galactose = 1-(9Z-octadecenoyl)-2-hexadecanoyl-3-beta-D-galactosyl-sn-glycerol + UDP + H(+). It catalyses the reaction 1,2-di-(9Z-octadecenoyl)-sn-glycerol + UDP-alpha-D-galactose = 1,2-di-(9Z-octadecenoyl)-3-beta-D-galactosyl-sn-glycerol + UDP + H(+). Its activity is regulated as follows. Activated by phosphatidate (PA) and phosphatidylglycerol (PG). Inhibited by galvestine-1. Functionally, involved in the synthesis of the major structural component of photosynthetic membranes. Required for proper thylakoid membrane biogenesis. Does not discriminate between prokaryotic (18:1/16:0) or eukaryotic (18:2/18:2) 1,2-diacylglycerol species, but operates with some preference for the prokaryotic one. Is responsible for most galactolipid synthesis in chloroplasts. Required for the formation of thylakoid membranes and functional photosynthetic electron transport during cotyledons greening in young seedlings. May link galactolipid synthesis with the coordinated transcriptional regulation of chloroplasts and other organelles during cotyledon greening. The sequence is that of Monogalactosyldiacylglycerol synthase 1, chloroplastic from Arabidopsis thaliana (Mouse-ear cress).